We begin with the raw amino-acid sequence, 183 residues long: Inner membrane protein p54 (183 aa).

The helical transmembrane segment at 32–52 (YTILIAIVVLVIIIIVLIYLF) threads the bilayer. The tract at residues 81–157 (EVTPQPGTSK…PYTTVTTQNT (77 aa)) is disordered. The segment covering 111-122 (RPATNKPVTDNP) has biased composition (polar residues). Low complexity predominate over residues 130–143 (ATGGPAAAPAAASA). The segment at 149–161 (YTTVTTQNTASQT) is interaction with host DYNLL1.

Belongs to the asfivirus envelope protein p54 family. As to quaternary structure, interacts with the host light chain cytoplasmic dynein DYNLL1; this interaction is critical for intracellular microtubule-dependent virus transport toward viral factories.

It is found in the virion membrane. Its subcellular location is the host cytoplasm. It localises to the host cytoskeleton. The protein localises to the host endoplasmic reticulum membrane. Functionally, inner envelope protein involved, through its interaction with host dynein, in the intracellular microtubule-dependent transport of viral capsid toward viral factories. Seems to induce caspase-3 activation and apoptosis. Plays a role in virion morphogenesis by recruiting and transforming the host ER membranes into the precursors of the viral envelope. Involved in virus attachment to the host cell. The chain is Inner membrane protein p54 from Ornithodoros (relapsing fever ticks).